Reading from the N-terminus, the 220-residue chain is Ras-related protein Rab-11B (220 aa).

18 to 25 contacts GTP; sequence GDSGVGKS. Residues 40–48 carry the Effector region motif; sequence KLSTIGVEF. Residues 66-70 and 124-127 contribute to the GTP site; these read DTAGQ and NKSD. S-geranylgeranyl cysteine attachment occurs at residues Cys219 and Cys220.

Belongs to the small GTPase superfamily. Rab family.

It is found in the cell membrane. This is Ras-related protein Rab-11B (rab11B) from Dictyostelium discoideum (Social amoeba).